The sequence spans 169 residues: Peptide deformylase (169 aa).

Positions 91 and 133 each coordinate Fe cation. Glutamate 134 is a catalytic residue. Residue histidine 137 coordinates Fe cation.

This sequence belongs to the polypeptide deformylase family. Requires Fe(2+) as cofactor.

The enzyme catalyses N-terminal N-formyl-L-methionyl-[peptide] + H2O = N-terminal L-methionyl-[peptide] + formate. Removes the formyl group from the N-terminal Met of newly synthesized proteins. Requires at least a dipeptide for an efficient rate of reaction. N-terminal L-methionine is a prerequisite for activity but the enzyme has broad specificity at other positions. This chain is Peptide deformylase, found in Haemophilus influenzae (strain 86-028NP).